Here is a 202-residue protein sequence, read N- to C-terminus: Histone chaperone ASF1B (202 aa).

An interaction with histone H3 and CHAF1B region spans residues 1–156 (MAKVSVLNVA…TRFHINWDNN (156 aa)). Ser-198 carries the post-translational modification Phosphoserine; by TLK2.

The protein belongs to the ASF1 family. As to quaternary structure, interacts with histone H3 (via C-terminus), including histone H3.1, H3.2 and H3.3, and histone H4; the interaction with H3 is direct. Interacts with the CHAF1A, CHAF1B and RBBP4 subunits of the CAF-1 complex. Interacts with HAT1, NASP and TAF1. Found in a soluble complex with NASP and histones H3 and H4; the interaction with NASP is probably indirect and mediated by H3-H4. Interacts with CDAN1. Found in a cytosolic complex with CDAN1, ASF1A, IPO4 and histones H3.1 and H4. Interacts with CREBBP. Post-translationally, phosphorylated by TLK2. Phosphorylated by TLK1. As to expression, highly expressed in germ cells. Restricted to premeiotic to meiotic stages during spermatogenesis.

Its subcellular location is the nucleus. The protein localises to the cytoplasm. It is found in the cytosol. In terms of biological role, histone chaperone that facilitates histone deposition and histone exchange and removal during nucleosome assembly and disassembly. Cooperates with chromatin assembly factor 1 (CAF-1) to promote replication-dependent chromatin assembly. Also involved in the nuclear import of the histone H3-H4 dimer together with importin-4 (IPO4): specifically recognizes and binds newly synthesized histones with the monomethylation of H3 'Lys-9' (H3K9me1) and diacetylation at 'Lys-5' and 'Lys-12' of H4 (H4K5ac and H4K12ac) marks in the cytosol. Does not participate in replication-independent nucleosome deposition which is mediated by ASF1A and HIRA. Required for gonad development. The chain is Histone chaperone ASF1B from Mus musculus (Mouse).